A 51-amino-acid polypeptide reads, in one-letter code: Insulin (51 aa).

Intrachain disulfides connect C7-C37, C19-C50, and C36-C41.

Belongs to the insulin family. As to quaternary structure, heterodimer of a B chain and an A chain linked by two disulfide bonds.

The protein localises to the secreted. Insulin decreases blood glucose concentration. It increases cell permeability to monosaccharides, amino acids and fatty acids. It accelerates glycolysis, the pentose phosphate cycle, and glycogen synthesis in liver. This is Insulin (INS) from Acomys cahirinus (Cairo spiny mouse).